A 317-amino-acid chain; its full sequence is L-lactate dehydrogenase (317 aa).

NAD(+) contacts are provided by residues V17, D38, K43, Y69, and 83–84; that span reads GA. Positions 86 and 92 each coordinate substrate. NAD(+) contacts are provided by residues S105, 122 to 124, and S147; that span reads ATN. 124-127 contributes to the substrate binding site; that stretch reads NPVD. Residue 152–155 coordinates substrate; that stretch reads DTAR. Beta-D-fructose 1,6-bisphosphate contacts are provided by R157 and H172. H179 serves as the catalytic Proton acceptor. Y224 bears the Phosphotyrosine mark. A substrate-binding site is contributed by T233.

It belongs to the LDH/MDH superfamily. LDH family. As to quaternary structure, homotetramer.

The protein localises to the cytoplasm. The catalysed reaction is (S)-lactate + NAD(+) = pyruvate + NADH + H(+). It participates in fermentation; pyruvate fermentation to lactate; (S)-lactate from pyruvate: step 1/1. Its activity is regulated as follows. Allosterically activated by fructose 1,6-bisphosphate (FBP). Its function is as follows. Catalyzes the conversion of lactate to pyruvate. The sequence is that of L-lactate dehydrogenase from Geobacillus thermodenitrificans (strain NG80-2).